A 175-amino-acid polypeptide reads, in one-letter code: Pathogenesis-related protein 1A1 (175 aa).

The signal sequence occupies residues 1 to 21 (MKSSIFVACFITFIIFHSSQA). In terms of domain architecture, SCP spans 29-146 (LNAHNAARRR…SGWVFITCNY (118 aa)). 3 disulfides stabilise this stretch: cysteine 65–cysteine 135, cysteine 108–cysteine 114, and cysteine 130–cysteine 144.

It belongs to the CRISP family.

Probably involved in the defense reaction of plants against pathogens. This chain is Pathogenesis-related protein 1A1, found in Solanum lycopersicum (Tomato).